Reading from the N-terminus, the 204-residue chain is Small ribosomal subunit protein uS7 (204 aa).

Met-1 is subject to N-acetylmethionine. Thr-2 carries the post-translational modification N-acetylthreonine; in 40S ribosomal protein S5, N-terminally processed. Thr-14 is modified (phosphothreonine). Lys-47 carries the N6-acetyllysine; alternate modification. A Glycyl lysine isopeptide (Lys-Gly) (interchain with G-Cter in SUMO2); alternate cross-link involves residue Lys-47. Ser-142 carries the phosphoserine modification.

The protein belongs to the universal ribosomal protein uS7 family. As to quaternary structure, component of the small ribosomal subunit. Part of the small subunit (SSU) processome, composed of more than 70 proteins and the RNA chaperone small nucleolar RNA (snoRNA) U3.

It is found in the cytoplasm. Its subcellular location is the nucleus. It localises to the nucleolus. Functionally, component of the small ribosomal subunit. The ribosome is a large ribonucleoprotein complex responsible for the synthesis of proteins in the cell. Part of the small subunit (SSU) processome, first precursor of the small eukaryotic ribosomal subunit. During the assembly of the SSU processome in the nucleolus, many ribosome biogenesis factors, an RNA chaperone and ribosomal proteins associate with the nascent pre-rRNA and work in concert to generate RNA folding, modifications, rearrangements and cleavage as well as targeted degradation of pre-ribosomal RNA by the RNA exosome. This chain is Small ribosomal subunit protein uS7 (Rps5), found in Rattus norvegicus (Rat).